The sequence spans 433 residues: Urokinase-type plasminogen activator (433 aa).

Residues 1–20 (MKVWLASLFLCALVVKNSEG) form the signal peptide. Residues 28–64 (DESNCGCQNGGVCVSYKYFSRIRRCSCPRKFQGEHCE) enclose the EGF-like domain. Disulfide bonds link Cys-32/Cys-40, Cys-34/Cys-52, Cys-54/Cys-63, Cys-71/Cys-152, Cys-92/Cys-134, and Cys-123/Cys-147. A binds urokinase plasminogen activator surface receptor region spans residues 35-58 (QNGGVCVSYKYFSRIRRCSCPRKF). The Kringle domain occupies 71-152 (CYHGNGDSYR…FVQECMVHDC (82 aa)). The tract at residues 153 to 179 (SLSKKPSSSVDQQGFQCGQKALRPRFK) is connecting peptide. Ser-159 is subject to Phosphoserine. Cystine bridges form between Cys-169/Cys-301, Cys-211/Cys-227, Cys-219/Cys-290, Cys-315/Cys-384, Cys-347/Cys-363, and Cys-374/Cys-402. The region spanning 180-426 (IVGGEFTEVE…FLDWIQSHIG (247 aa)) is the Peptidase S1 domain. Catalysis depends on charge relay system residues His-226 and Asp-277. The Charge relay system role is filled by Ser-378.

It belongs to the peptidase S1 family. As to quaternary structure, found in high and low molecular mass forms. Each consists of two chains, A and B. The high molecular mass form contains a long chain A which is cleaved to yield a short chain A. Forms heterodimer with SERPINA5. Binds LRP1B; binding is followed by internalization and degradation. Interacts with MRC2. Interacts with PLAUR. In complex with SERPINE1, interacts with PLAUR/uPAR. Interacts with SORL1 and LRP1, either alone or in complex with SERPINE1; these interactions are abolished in the presence of LRPAP1/RAP. The ternary complex composed of PLAUR-PLAU-PAI1 also interacts with SORLA. Post-translationally, produced as an inactive single-chain protein (pro-uPA or sc-uPA), is processed into the active disulfide-linked two-chain form of PLAU/uPA by a proteolytic event mediated, at least, by TMPRSS4.

It is found in the secreted. The catalysed reaction is Specific cleavage of Arg-|-Val bond in plasminogen to form plasmin.. Inhibited by SERPINA5. Inhibited by SERPINE1. Specifically cleaves the zymogen plasminogen to form the active enzyme plasmin. This is Urokinase-type plasminogen activator (Plau) from Mus musculus (Mouse).